The primary structure comprises 515 residues: Ribosome assembly protein 4 (515 aa).

The tract at residues 20 to 128 (REVAIIPKDL…LLYTPRAVFK (109 aa)) is interaction with MDN1. A ubiquitin-like (UBL) domain region spans residues 29 to 125 (LPNVSIKFQA…QITLLYTPRA (97 aa)). WD repeat units lie at residues 141–181 (GHGS…PMHT), 184–223 (GHYN…CLGD), 227–273 (GHSK…CQYT), 276–314 (GHTN…RCIN), 352–396 (AQKK…KPIA), 400–439 (GHQK…FIST), 442–481 (GHVA…LSVD), and 484–515 (GHKD…LWTH).

This sequence belongs to the NLE1/RSA4 family. In terms of assembly, associates with the pre-60S ribosomal particle. Interacts (via WD repeats) with uL18 (RPL5). Interacts (via UBL domain) with MDN1 (via VWFA/MIDAS domain). Interacts (via WD repeats) with NSA2.

The protein localises to the nucleus. It is found in the nucleolus. Involved in ribosome biogenesis. Required for processing and efficient intra-nuclear transport of pre-60S ribosomal subunits. Interacts with the AAA-ATPase Midasin (MDN1/REA1), which is essential for the ATP-dependent dissociation of a group of nonribosomal factors from the pre-60S particle. The protein is Ribosome assembly protein 4 of Saccharomyces cerevisiae (strain ATCC 204508 / S288c) (Baker's yeast).